A 602-amino-acid chain; its full sequence is Exopolysaccharide phosphotransferase SCO2594 (602 aa).

The disordered stretch occupies residues 251-271 (PRAGEDLDAGDGAAGGPRPGL).

This sequence belongs to the stealth family.

The chain is Exopolysaccharide phosphotransferase SCO2594 from Streptomyces coelicolor (strain ATCC BAA-471 / A3(2) / M145).